Consider the following 662-residue polypeptide: MTSKAVVFAYHDIGCTGIEALLNAGYEIAAVFTHADDPRENTFYASVARLCAERGIALHAPEDVNHPLWLERIRQLRPDFLFSFYYRRLLGAELLACAARGAYNLHGSLLPRYRGRAPANWVLVNGETQTGVTLHRMVERADAGPILAQQAVAIDPEDTALSLHGKLRKAAGALLRDSLPLLALGVLPEVEQDESQASHFGRRTAADGLLDWHRPARQLYDLVRAVTQPYPGAFCQVGEQKLIVWSAEVVAGNHGREPGSVLSCDPLRIACGEDSLVLRFGQRGERGLYLAGTQLATELGLVEGARLRGPASGPQRRTRVLILGVNGFIGNHLSERLLRDGRYEVHGMDIGSDAIERLKADPHFHFVEGDIGIHSEWLEYHVKKCDVILPLVAIATPIEYTRNPLRVFELDFEENLRIVRYCVKYGKRVVFPSTSEVYGMCQDPDFDEDRSNLVVGPINKQRWIYSVSKQLLDRVIWAYGQQGLRFTLFRPFNWMGPRLDRLESARIGSSRAITQLILHLVEGTPIRLVDGGAQKRCFTDVDDGIEALARIIDNRDGRCDGQIVNIGNPDNEASIRQLGEELLRQFEAHPLRAQFPPFAGFREVESRSFYGDGYQDVAHRKPSIENARRLLDWQPAIELRETIGKTLDFFLHEALREREAQA.

Residues 1–307 are formyltransferase ArnAFT; it reads MTSKAVVFAY…ELGLVEGARL (307 aa). Residue His-106 is the Proton donor; for formyltransferase activity of the active site. Residues Arg-116 and 138-142 contribute to the (6R)-10-formyltetrahydrofolate site; that span reads VERAD. A dehydrogenase ArnADH region spans residues 316 to 662; that stretch reads RRTRVLILGV…EALREREAQA (347 aa). NAD(+)-binding positions include Asp-349 and 370–371; that span reads DI. Residues Ala-395, Tyr-400, and 434–435 contribute to the UDP-alpha-D-glucuronate site; that span reads TS. Residue Glu-436 is the Proton acceptor; for decarboxylase activity of the active site. UDP-alpha-D-glucuronate-binding positions include Arg-462, Asn-493, 527 to 536, and Tyr-614; that span reads RLVDGGAQKR. Arg-620 serves as the catalytic Proton donor; for decarboxylase activity.

The protein in the N-terminal section; belongs to the Fmt family. UDP-L-Ara4N formyltransferase subfamily. This sequence in the C-terminal section; belongs to the NAD(P)-dependent epimerase/dehydratase family. UDP-glucuronic acid decarboxylase subfamily. As to quaternary structure, homohexamer, formed by a dimer of trimers.

The catalysed reaction is UDP-alpha-D-glucuronate + NAD(+) = UDP-beta-L-threo-pentopyranos-4-ulose + CO2 + NADH. It catalyses the reaction UDP-4-amino-4-deoxy-beta-L-arabinose + (6R)-10-formyltetrahydrofolate = UDP-4-deoxy-4-formamido-beta-L-arabinose + (6S)-5,6,7,8-tetrahydrofolate + H(+). It participates in nucleotide-sugar biosynthesis; UDP-4-deoxy-4-formamido-beta-L-arabinose biosynthesis; UDP-4-deoxy-4-formamido-beta-L-arabinose from UDP-alpha-D-glucuronate: step 1/3. Its pathway is nucleotide-sugar biosynthesis; UDP-4-deoxy-4-formamido-beta-L-arabinose biosynthesis; UDP-4-deoxy-4-formamido-beta-L-arabinose from UDP-alpha-D-glucuronate: step 3/3. The protein operates within bacterial outer membrane biogenesis; lipopolysaccharide biosynthesis. Bifunctional enzyme that catalyzes the oxidative decarboxylation of UDP-glucuronic acid (UDP-GlcUA) to UDP-4-keto-arabinose (UDP-Ara4O) and the addition of a formyl group to UDP-4-amino-4-deoxy-L-arabinose (UDP-L-Ara4N) to form UDP-L-4-formamido-arabinose (UDP-L-Ara4FN). The modified arabinose is attached to lipid A and is required for resistance to polymyxin and cationic antimicrobial peptides. This Pseudomonas paraeruginosa (strain DSM 24068 / PA7) (Pseudomonas aeruginosa (strain PA7)) protein is Bifunctional polymyxin resistance protein ArnA.